A 374-amino-acid polypeptide reads, in one-letter code: Protein RecA (374 aa).

77–84 (GPESSGKT) contacts ATP. The interval 355–374 (AAKTAAADKSAPAKASEAAA) is disordered.

Belongs to the RecA family.

The protein localises to the cytoplasm. Can catalyze the hydrolysis of ATP in the presence of single-stranded DNA, the ATP-dependent uptake of single-stranded DNA by duplex DNA, and the ATP-dependent hybridization of homologous single-stranded DNAs. It interacts with LexA causing its activation and leading to its autocatalytic cleavage. This chain is Protein RecA, found in Synechococcus sp. (strain CC9605).